We begin with the raw amino-acid sequence, 326 residues long: Metallophosphoesterase domain-containing protein 1 (326 aa).

Belongs to the UPF0046 family. As to expression, expressed predominantly in adult brain.

May have metallophosphoesterase activity (in vitro). The polypeptide is Metallophosphoesterase domain-containing protein 1 (MPPED1) (Homo sapiens (Human)).